A 250-amino-acid polypeptide reads, in one-letter code: UPF0758 protein tlr1707 (250 aa).

Residues 116–239 form the MPN domain; it reads TIIDSPALAA…YQSLREITPL (124 aa). Residues His188, His190, and Asp201 each contribute to the Zn(2+) site. The short motif at 188–201 is the JAMM motif element; it reads HNHPSGNLSPSQAD.

The protein belongs to the UPF0758 family.

The protein is UPF0758 protein tlr1707 of Thermosynechococcus vestitus (strain NIES-2133 / IAM M-273 / BP-1).